Reading from the N-terminus, the 113-residue chain is Major basic nuclear protein 1 (113 aa).

The disordered stretch occupies residues 1-20; that stretch reads MAPKMKAAMKAMKAPAMKGK.

The protein localises to the nucleus. In Crypthecodinium cohnii (Dinoflagellate), this protein is Major basic nuclear protein 1 (HCc1).